The following is a 386-amino-acid chain: Succinate--CoA ligase [ADP-forming] subunit beta (386 aa).

In terms of domain architecture, ATP-grasp spans 9–244 (KEILHKFNVP…YDEEVKEEIE (236 aa)). Residues K46, 53-55 (GRG), E99, S102, and E107 each bind ATP. Residues N199 and D213 each contribute to the Mg(2+) site. Substrate is bound by residues N264 and 321–323 (GIM).

This sequence belongs to the succinate/malate CoA ligase beta subunit family. As to quaternary structure, heterotetramer of two alpha and two beta subunits. The cofactor is Mg(2+).

The enzyme catalyses succinate + ATP + CoA = succinyl-CoA + ADP + phosphate. It catalyses the reaction GTP + succinate + CoA = succinyl-CoA + GDP + phosphate. Its pathway is carbohydrate metabolism; tricarboxylic acid cycle; succinate from succinyl-CoA (ligase route): step 1/1. In terms of biological role, succinyl-CoA synthetase functions in the citric acid cycle (TCA), coupling the hydrolysis of succinyl-CoA to the synthesis of either ATP or GTP and thus represents the only step of substrate-level phosphorylation in the TCA. The beta subunit provides nucleotide specificity of the enzyme and binds the substrate succinate, while the binding sites for coenzyme A and phosphate are found in the alpha subunit. This is Succinate--CoA ligase [ADP-forming] subunit beta from Wolbachia sp. subsp. Brugia malayi (strain TRS).